A 48-amino-acid chain; its full sequence is ATP synthase protein 8 (48 aa).

The helical transmembrane segment at 4-24 (LVPFYFINILSFGFLIFTVLL) threads the bilayer.

It belongs to the ATPase protein 8 family. In terms of assembly, F-type ATPases have 2 components, CF(1) - the catalytic core - and CF(0) - the membrane proton channel.

It localises to the mitochondrion membrane. Functionally, mitochondrial membrane ATP synthase (F(1)F(0) ATP synthase or Complex V) produces ATP from ADP in the presence of a proton gradient across the membrane which is generated by electron transport complexes of the respiratory chain. F-type ATPases consist of two structural domains, F(1) - containing the extramembraneous catalytic core and F(0) - containing the membrane proton channel, linked together by a central stalk and a peripheral stalk. During catalysis, ATP synthesis in the catalytic domain of F(1) is coupled via a rotary mechanism of the central stalk subunits to proton translocation. Part of the complex F(0) domain. Minor subunit located with subunit a in the membrane. This chain is ATP synthase protein 8 (atp8), found in Schizosaccharomyces pombe (strain 972 / ATCC 24843) (Fission yeast).